The chain runs to 146 residues: D-aminoacyl-tRNA deacylase (146 aa).

Positions 138–139 (GP) match the Gly-cisPro motif, important for rejection of L-amino acids motif.

Belongs to the DTD family. Homodimer.

The protein localises to the cytoplasm. It carries out the reaction glycyl-tRNA(Ala) + H2O = tRNA(Ala) + glycine + H(+). The enzyme catalyses a D-aminoacyl-tRNA + H2O = a tRNA + a D-alpha-amino acid + H(+). In terms of biological role, an aminoacyl-tRNA editing enzyme that deacylates mischarged D-aminoacyl-tRNAs. Also deacylates mischarged glycyl-tRNA(Ala), protecting cells against glycine mischarging by AlaRS. Acts via tRNA-based rather than protein-based catalysis; rejects L-amino acids rather than detecting D-amino acids in the active site. By recycling D-aminoacyl-tRNA to D-amino acids and free tRNA molecules, this enzyme counteracts the toxicity associated with the formation of D-aminoacyl-tRNA entities in vivo and helps enforce protein L-homochirality. This chain is D-aminoacyl-tRNA deacylase, found in Xanthomonas campestris pv. campestris (strain 8004).